The following is a 388-amino-acid chain: Paired box protein Pax-5 (388 aa).

The segment at residues 15–141 (RHGGVNQLGG…SSINRIIRTK (127 aa)) is a DNA-binding region (paired). The tract at residues 18–74 (GVNQLGGVFVNGRPLPDVVRQRIVELAHQGVRPCDISRQLRVSHGCVSKILGRYYET) is PAI subdomain. Residues 93-141 (KVVDKIADYKRQNPTMFAWEIRDRLLAERVCDNDTVPSVSSINRIIRTK) form an RED subdomain region. Polar residues predominate over residues 143–158 (QQPTNQQIPPSNHSIA). 2 disordered regions span residues 143-162 (QQPTNQQIPPSNHSIASTGS) and 191-217 (AETNKRKRDEGIQESPIPNGHSLPGRD).

As to expression, first detected in mid-neurula embryos in the folding neural tube. With the completion of neurulation, expression becomes localized to the midbrain/hindbrain boundary (MHB) till at least stage 40. Expression is absent from regions adjacent to the MHB. In tailbuds, weakly and transiently expressed in the developing otic vesicle from stage 21 to stage 27.

Its subcellular location is the nucleus. In terms of biological role, probable transcription factor. The chain is Paired box protein Pax-5 from Xenopus laevis (African clawed frog).